The following is a 444-amino-acid chain: Aspartate--tRNA(Asp/Asn) ligase (444 aa).

Glu176 contacts L-aspartate. Residues 198-201 (QLFK) form an aspartate region. Residue Arg220 coordinates L-aspartate. ATP is bound by residues 220-222 (RAE), 228-230 (RHL), and Glu367. Positions 367 and 370 each coordinate Mg(2+). 2 residues coordinate L-aspartate: Ser370 and Arg374. 415-418 (GCER) lines the ATP pocket.

It belongs to the class-II aminoacyl-tRNA synthetase family. Type 2 subfamily. In terms of assembly, homodimer. It depends on Mg(2+) as a cofactor.

The protein localises to the cytoplasm. It catalyses the reaction tRNA(Asx) + L-aspartate + ATP = L-aspartyl-tRNA(Asx) + AMP + diphosphate. Functionally, aspartyl-tRNA synthetase with relaxed tRNA specificity since it is able to aspartylate not only its cognate tRNA(Asp) but also tRNA(Asn). Reaction proceeds in two steps: L-aspartate is first activated by ATP to form Asp-AMP and then transferred to the acceptor end of tRNA(Asp/Asn). This chain is Aspartate--tRNA(Asp/Asn) ligase, found in Methanosarcina acetivorans (strain ATCC 35395 / DSM 2834 / JCM 12185 / C2A).